We begin with the raw amino-acid sequence, 41 residues long: Photosystem I reaction center subunit IX (41 aa).

The helical transmembrane segment at 7–27 (YLSTAPVLATVWMIITAGILI) threads the bilayer.

It belongs to the PsaJ family.

It is found in the cellular thylakoid membrane. In terms of biological role, may help in the organization of the PsaE and PsaF subunits. The sequence is that of Photosystem I reaction center subunit IX from Trichodesmium erythraeum (strain IMS101).